We begin with the raw amino-acid sequence, 441 residues long: Ribosomal protein uS12 methylthiotransferase RimO (441 aa).

The MTTase N-terminal domain maps to 8 to 118 (PKIGFVSLGC…VLEHVHHYVP (111 aa)). Residues Cys-17, Cys-53, Cys-82, Cys-150, Cys-154, and Cys-157 each coordinate [4Fe-4S] cluster. The Radical SAM core domain occupies 136 to 373 (LTPRHYAYLK…MQLQQQISAE (238 aa)). A TRAM domain is found at 376 to 441 (QEKVGREILV…DEYDLWGSRV (66 aa)).

The protein belongs to the methylthiotransferase family. RimO subfamily. [4Fe-4S] cluster serves as cofactor.

It is found in the cytoplasm. The enzyme catalyses L-aspartate(89)-[ribosomal protein uS12]-hydrogen + (sulfur carrier)-SH + AH2 + 2 S-adenosyl-L-methionine = 3-methylsulfanyl-L-aspartate(89)-[ribosomal protein uS12]-hydrogen + (sulfur carrier)-H + 5'-deoxyadenosine + L-methionine + A + S-adenosyl-L-homocysteine + 2 H(+). Catalyzes the methylthiolation of an aspartic acid residue of ribosomal protein uS12. The polypeptide is Ribosomal protein uS12 methylthiotransferase RimO (Shigella flexneri).